The sequence spans 448 residues: tRNA(Ile)-lysidine synthase (448 aa).

ATP is bound at residue 30-35 (GGGADS).

The protein belongs to the tRNA(Ile)-lysidine synthase family.

It localises to the cytoplasm. It catalyses the reaction cytidine(34) in tRNA(Ile2) + L-lysine + ATP = lysidine(34) in tRNA(Ile2) + AMP + diphosphate + H(+). Functionally, ligates lysine onto the cytidine present at position 34 of the AUA codon-specific tRNA(Ile) that contains the anticodon CAU, in an ATP-dependent manner. Cytidine is converted to lysidine, thus changing the amino acid specificity of the tRNA from methionine to isoleucine. The chain is tRNA(Ile)-lysidine synthase from Idiomarina loihiensis (strain ATCC BAA-735 / DSM 15497 / L2-TR).